The following is a 353-amino-acid chain: Chemerin-like receptor 2 (353 aa).

The Extracellular portion of the chain corresponds to 1–41; it reads MEVSKEMLFEELDNYSYALDYYSQESDPEEKVYLGLVHWIS. Residue N14 is glycosylated (N-linked (GlcNAc...) asparagine). Residues 42-62 traverse the membrane as a helical segment; it reads LFLYALAFVLGIPGNAIVIWL. Residues 63 to 73 lie on the Cytoplasmic side of the membrane; the sequence is MGFKWKKTVTT. A helical membrane pass occupies residues 74–94; the sequence is LWFLNLAIADFIFVLFLPLYI. The Extracellular segment spans residues 95–112; the sequence is SYVALSFHWPFGLWLCKV. Cysteines 110 and 187 form a disulfide. A helical membrane pass occupies residues 113-133; it reads NSFIAQLNMFSSVFFLTVISL. Topologically, residues 134-154 are cytoplasmic; it reads DRYIHLLHPGLSHRHRTLKSS. Residues 155–175 traverse the membrane as a helical segment; the sequence is LVVVILVWLLASLLGGPTLYF. Residues 176 to 210 lie on the Extracellular side of the membrane; the sequence is RDTMEVNNHIICYNNFQEHELTLMRHHVLTWVKFL. A helical membrane pass occupies residues 211–231; the sequence is FGYLFPLLTMSSCYLCLIFKM. The Cytoplasmic segment spans residues 232-247; the sequence is KKRNILISRKHLWMIL. Residues 248–268 form a helical membrane-spanning segment; the sequence is SVVIAFLVCWTPYHLFSIWEL. Residues 269–286 lie on the Extracellular side of the membrane; sequence SIHHNSSFQNVLQGGIPL. The helical transmembrane segment at 287–307 threads the bilayer; sequence STGLAFLNSCLNPILYVLISK. Over 308 to 353 the chain is Cytoplasmic; the sequence is TFQARFRASVAEVLKRSLWEASCSGTVSEQLRSAETKSLSLLETAQ.

The protein belongs to the chemokine-like receptor (CMKLR) family. High expressed in white adipose tissue and skeletal muscle. Expressed in hippocampus and cortex.

It localises to the cell membrane. Receptor for chemoattractant adipokine chemerin/RARRES2 suggesting a role for this receptor in the regulation of inflammation and energy homesotasis. Signals mainly via beta-arrestin pathway. Binding of RARRES2 activates weakly G proteins, calcium mobilization and MAPK1/MAPK3 (ERK1/2) phosphorylation too. Acts also as a receptor for TAFA1, mediates its effects on neuronal stem-cell proliferation and differentiation via the activation of ROCK/ERK and ROCK/STAT3 signaling pathway. The polypeptide is Chemerin-like receptor 2 (Cmklr2) (Mus musculus (Mouse)).